A 217-amino-acid chain; its full sequence is Uracil-DNA glycosylase (217 aa).

Asp-62 functions as the Proton acceptor in the catalytic mechanism.

The protein belongs to the uracil-DNA glycosylase (UDG) superfamily. UNG family.

The protein localises to the cytoplasm. It catalyses the reaction Hydrolyzes single-stranded DNA or mismatched double-stranded DNA and polynucleotides, releasing free uracil.. Its function is as follows. Excises uracil residues from the DNA which can arise as a result of misincorporation of dUMP residues by DNA polymerase or due to deamination of cytosine. This is Uracil-DNA glycosylase from Streptococcus suis (strain 98HAH33).